The chain runs to 83 residues: Delta-conotoxin-like Ac6.1 (83 aa).

An N-terminal signal peptide occupies residues 1–22 (MKLTCVVIVAVLFLTAWTFVMA). The propeptide occupies 23 to 51 (DDSRYGLKDLFPKARHEMKNPEASKLNKR). Disulfide bonds link cysteine 54–cysteine 69, cysteine 61–cysteine 73, and cysteine 68–cysteine 78. Proline 57 and proline 65 each carry 4-hydroxyproline.

The protein belongs to the conotoxin O1 superfamily. As to expression, expressed by the venom duct.

It localises to the secreted. Its function is as follows. Delta-conotoxins bind to site 6 of voltage-gated sodium channels (Nav) and inhibit the inactivation process. In Conus achatinus (Little frog cone), this protein is Delta-conotoxin-like Ac6.1.